Reading from the N-terminus, the 534-residue chain is NAD(P)H-quinone oxidoreductase chain 4 (534 aa).

The next 14 helical transmembrane spans lie at 12–32 (FPWLSASILFPIGSAFVIPFF), 44–64 (FALSIALITFLITVGSYINGF), 96–116 (MPLILLTSFITALAVLAAWPV), 120–140 (PKLFFFLILVMDGGQIAVFAV), 144–164 (LLFFLTWELELIPVYLLLAIW), 176–196 (FIIYTAGSSIFILLAALAMGF), 220–240 (ILCYVGLLIAFGVKLPIVPLH), 251–271 (TAPVHMLLAGILLKMGGYALL), 285–305 (FAPLLIVLGVVNIIYAALTSF), 314–334 (IAYSSISHMGFVLIGIGSFSS), 340–360 (AMLQMVSHGLIGASLFFLVGA), 384–404 (FALWTACSLASLALPGMSGFV), 425–445 (VVMASLAAIGVILTPIYLLSM), and 472–492 (VYIIACLLLPIIGIGLYPRLV).

The protein belongs to the complex I subunit 4 family.

Its subcellular location is the cellular thylakoid membrane. It carries out the reaction a plastoquinone + NADH + (n+1) H(+)(in) = a plastoquinol + NAD(+) + n H(+)(out). It catalyses the reaction a plastoquinone + NADPH + (n+1) H(+)(in) = a plastoquinol + NADP(+) + n H(+)(out). NDH-1 shuttles electrons from NAD(P)H, via FMN and iron-sulfur (Fe-S) centers, to quinones in the respiratory chain. The immediate electron acceptor for the enzyme in this species is believed to be plastoquinone. Couples the redox reaction to proton translocation (for every two electrons transferred, four hydrogen ions are translocated across the cytoplasmic membrane), and thus conserves the redox energy in a proton gradient. This is NAD(P)H-quinone oxidoreductase chain 4 from Prochlorococcus marinus (strain AS9601).